The chain runs to 719 residues: Polyribonucleotide nucleotidyltransferase (719 aa).

Aspartate 507 and aspartate 513 together coordinate Mg(2+). The KH domain maps to 573 to 633 (PKLELFSVDP…EQIKAAKDYI (61 aa)). The S1 motif domain maps to 658-719 (GQEFQGIVKK…NGKISVDLCE (62 aa)).

This sequence belongs to the polyribonucleotide nucleotidyltransferase family. The cofactor is Mg(2+).

The protein localises to the cytoplasm. The enzyme catalyses RNA(n+1) + phosphate = RNA(n) + a ribonucleoside 5'-diphosphate. Involved in mRNA degradation. Catalyzes the phosphorolysis of single-stranded polyribonucleotides processively in the 3'- to 5'-direction. The polypeptide is Polyribonucleotide nucleotidyltransferase (Campylobacter jejuni subsp. jejuni serotype O:2 (strain ATCC 700819 / NCTC 11168)).